A 716-amino-acid polypeptide reads, in one-letter code: Polyribonucleotide nucleotidyltransferase (716 aa).

Mg(2+) is bound by residues D490 and D496. The region spanning 556 to 615 (PKIETLTIPTDKIREVIGSGGKVIREIVETSGAKVDINDDGVIKIASNDQAAIKKAYDMI) is the KH domain. Residues 625-693 (GQIYTGKVVK…ERGKVRLGMK (69 aa)) form the S1 motif domain. The disordered stretch occupies residues 695 to 716 (VDQETGQEIQPEKKEREEAGEA). Residues 704–716 (QPEKKEREEAGEA) show a composition bias toward basic and acidic residues.

The protein belongs to the polyribonucleotide nucleotidyltransferase family. The cofactor is Mg(2+).

It is found in the cytoplasm. The catalysed reaction is RNA(n+1) + phosphate = RNA(n) + a ribonucleoside 5'-diphosphate. Its function is as follows. Involved in mRNA degradation. Catalyzes the phosphorolysis of single-stranded polyribonucleotides processively in the 3'- to 5'-direction. This chain is Polyribonucleotide nucleotidyltransferase, found in Cereibacter sphaeroides (strain KD131 / KCTC 12085) (Rhodobacter sphaeroides).